Reading from the N-terminus, the 378-residue chain is Chaperone protein DnaJ (378 aa).

The region spanning 3–67 (DYYDLLGVSK…QTRGRYDQFG (65 aa)) is the J domain. A CR-type zinc finger spans residues 133–215 (GQEREIKIPH…CAGQGVRQVR (83 aa)). 8 residues coordinate Zn(2+): cysteine 146, cysteine 149, cysteine 163, cysteine 166, cysteine 189, cysteine 192, cysteine 203, and cysteine 206. CXXCXGXG motif repeat units lie at residues 146-153 (CDTCNGTG), 163-170 (CSTCGGVG), 189-196 (CPSCEGTG), and 203-210 (CPACAGQG).

Belongs to the DnaJ family. In terms of assembly, homodimer. Requires Zn(2+) as cofactor.

The protein localises to the cytoplasm. In terms of biological role, participates actively in the response to hyperosmotic and heat shock by preventing the aggregation of stress-denatured proteins and by disaggregating proteins, also in an autonomous, DnaK-independent fashion. Unfolded proteins bind initially to DnaJ; upon interaction with the DnaJ-bound protein, DnaK hydrolyzes its bound ATP, resulting in the formation of a stable complex. GrpE releases ADP from DnaK; ATP binding to DnaK triggers the release of the substrate protein, thus completing the reaction cycle. Several rounds of ATP-dependent interactions between DnaJ, DnaK and GrpE are required for fully efficient folding. Also involved, together with DnaK and GrpE, in the DNA replication of plasmids through activation of initiation proteins. The sequence is that of Chaperone protein DnaJ from Prochlorococcus marinus (strain MIT 9313).